The following is a 94-amino-acid chain: Large ribosomal subunit protein eL37 (94 aa).

4 residues coordinate Zn(2+): Cys19, Cys22, Cys34, and Cys37. A C4-type zinc finger spans residues 19-37 (CRRCGKATYHKQKLRCAAC).

Belongs to the eukaryotic ribosomal protein eL37 family. It depends on Zn(2+) as a cofactor.

It localises to the cytoplasm. Functionally, binds to the 23S rRNA. The chain is Large ribosomal subunit protein eL37 (RPL37) from Tetrahymena thermophila (strain SB210).